The chain runs to 440 residues: Histidinol dehydrogenase (440 aa).

Residues Y133, Q194, and N217 each contribute to the NAD(+) site. Residues S240, Q262, and H265 each coordinate substrate. Positions 262 and 265 each coordinate Zn(2+). Active-site proton acceptor residues include E330 and H331. Residues H331, D364, E418, and H423 each coordinate substrate. A Zn(2+)-binding site is contributed by D364. Zn(2+) is bound at residue H423.

It belongs to the histidinol dehydrogenase family. The cofactor is Zn(2+).

The catalysed reaction is L-histidinol + 2 NAD(+) + H2O = L-histidine + 2 NADH + 3 H(+). Its pathway is amino-acid biosynthesis; L-histidine biosynthesis; L-histidine from 5-phospho-alpha-D-ribose 1-diphosphate: step 9/9. Its function is as follows. Catalyzes the sequential NAD-dependent oxidations of L-histidinol to L-histidinaldehyde and then to L-histidine. The protein is Histidinol dehydrogenase of Nitrosospira multiformis (strain ATCC 25196 / NCIMB 11849 / C 71).